A 207-amino-acid polypeptide reads, in one-letter code: ADP-ribosylation factor (207 aa).

Residue G2 is the site of N-myristoyl glycine attachment. GTP contacts are provided by residues 32–39 (GLDGAGKT), 75–79 (DIGGQ), and 133–136 (NKID).

Belongs to the small GTPase superfamily. Arf family.

Its subcellular location is the golgi apparatus. GTP-binding protein involved in protein trafficking; may modulate vesicle budding and uncoating within the Golgi apparatus. This is ADP-ribosylation factor (ARF-1) from Encephalitozoon cuniculi (strain GB-M1) (Microsporidian parasite).